An 88-amino-acid chain; its full sequence is Small ribosomal subunit protein uS17 (88 aa).

It belongs to the universal ribosomal protein uS17 family. In terms of assembly, part of the 30S ribosomal subunit.

In terms of biological role, one of the primary rRNA binding proteins, it binds specifically to the 5'-end of 16S ribosomal RNA. The protein is Small ribosomal subunit protein uS17 of Syntrophotalea carbinolica (strain DSM 2380 / NBRC 103641 / GraBd1) (Pelobacter carbinolicus).